Reading from the N-terminus, the 365-residue chain is MGSTGETQMTPTQVSDEEANLFAMQLASASVLPMVLKAAIELDLLEIMAKAGPGVFLSPTDIASQLPTKNPDAPVMLDRMLRLLASYSILTYSLRTLADGKVERLYGLGPVCKFLTKNEEGVSIAPLCLMNQDKVLLESWYHLKDAVLEGGIPFNKAYGMTAFEYHGTDPRFNKVFNRGMADHSTITMKKILETYKGFEGLTSVVDVGGGTGAVLNMIVSKYPSIKGINFDLPHVIEDAPQYPGVEHVGGDMFVSVPKGDAIFMKWICHDWSDEHCLKFLKNCYAALPDNGKVILGECILPVAPDSSLATKGVVHIDVIMLAHNPGGKERTEQEFQALAKGAGFQGFNVACSAFNTYVIEFLKKN.

Residue Met-130 to Leu-136 participates in substrate binding. Positions Ala-162–Met-180 are substrate binding. The S-adenosyl-L-methionine site is built by Gly-208, Asp-231, Asp-251, Met-252, and Lys-265. His-269 (proton acceptor) is an active-site residue.

This sequence belongs to the class I-like SAM-binding methyltransferase superfamily. Cation-independent O-methyltransferase family. COMT subfamily. Homodimer.

The enzyme catalyses (E)-caffeate + S-adenosyl-L-methionine = (E)-ferulate + S-adenosyl-L-homocysteine + H(+). It participates in aromatic compound metabolism; phenylpropanoid biosynthesis. Its function is as follows. Catalyzes the conversion of caffeic acid to ferulic acid and of 5-hydroxyferulic acid to sinapic acid. The resulting products may subsequently be converted to the corresponding alcohols that are incorporated into lignins. In Prunus dulcis (Almond), this protein is Caffeic acid 3-O-methyltransferase (COMT1).